A 597-amino-acid chain; its full sequence is Aspartate--tRNA ligase (597 aa).

Glutamate 180 serves as a coordination point for L-aspartate. The tract at residues 204 to 207 is aspartate; the sequence is QLFK. Arginine 226 lines the L-aspartate pocket. Residues 226 to 228 and glutamine 235 contribute to the ATP site; that span reads RDE. Residue histidine 454 coordinates L-aspartate. Glutamate 488 provides a ligand contact to ATP. An L-aspartate-binding site is contributed by arginine 495. 540–543 is a binding site for ATP; the sequence is GLDR.

Belongs to the class-II aminoacyl-tRNA synthetase family. Type 1 subfamily. As to quaternary structure, homodimer.

It localises to the cytoplasm. It carries out the reaction tRNA(Asp) + L-aspartate + ATP = L-aspartyl-tRNA(Asp) + AMP + diphosphate. Functionally, catalyzes the attachment of L-aspartate to tRNA(Asp) in a two-step reaction: L-aspartate is first activated by ATP to form Asp-AMP and then transferred to the acceptor end of tRNA(Asp). The chain is Aspartate--tRNA ligase from Clostridium perfringens (strain SM101 / Type A).